The primary structure comprises 213 residues: Ribonuclease HII (213 aa).

The RNase H type-2 domain occupies 18-213 (GLYAGVDEVG…RPVKERLAKN (196 aa)). A divalent metal cation is bound by residues D24, E25, and D116.

It belongs to the RNase HII family. Mn(2+) is required as a cofactor. Requires Mg(2+) as cofactor.

The protein resides in the cytoplasm. The catalysed reaction is Endonucleolytic cleavage to 5'-phosphomonoester.. In terms of biological role, endonuclease that specifically degrades the RNA of RNA-DNA hybrids. The polypeptide is Ribonuclease HII (Shewanella sediminis (strain HAW-EB3)).